The chain runs to 215 residues: Cytochrome b6 (215 aa).

Residues 32–52 form a helical membrane-spanning segment; the sequence is IFYCLGGITLTCFLVQVATGF. Cys35 lines the heme c pocket. 2 residues coordinate heme b: His86 and His100. 3 helical membrane passes run 90–110, 116–136, and 186–206; these read ASMMVLMTILHVFRVYLTGGF, LTWVTGVVLAVLTASFGVTGY, and LHTFVLPLLTAVFMLMHFLMI. Heme b-binding residues include His187 and His202.

The protein belongs to the cytochrome b family. PetB subfamily. The 4 large subunits of the cytochrome b6-f complex are cytochrome b6, subunit IV (17 kDa polypeptide, PetD), cytochrome f and the Rieske protein, while the 4 small subunits are PetG, PetL, PetM and PetN. The complex functions as a dimer. Heme b serves as cofactor. The cofactor is heme c.

It is found in the plastid. Its subcellular location is the chloroplast thylakoid membrane. Functionally, component of the cytochrome b6-f complex, which mediates electron transfer between photosystem II (PSII) and photosystem I (PSI), cyclic electron flow around PSI, and state transitions. The polypeptide is Cytochrome b6 (Citrus sinensis (Sweet orange)).